Consider the following 75-residue polypeptide: Translational regulator CsrA (75 aa).

The protein belongs to the CsrA/RsmA family. In terms of assembly, homodimer; the beta-strands of each monomer intercalate to form a hydrophobic core, while the alpha-helices form wings that extend away from the core. Interacts with FliW.

The protein resides in the cytoplasm. Functionally, a translational regulator that binds mRNA to regulate translation initiation and/or mRNA stability. Usually binds in the 5'-UTR at or near the Shine-Dalgarno sequence preventing ribosome-binding, thus repressing translation. Its function is probably anatagonized by FliW. Inhibits translation of flaA mRNA in vitro. Involved in post-transcriptional regulation of flagellin biosynthesis. In Campylobacter jejuni subsp. jejuni serotype O:6 (strain 81116 / NCTC 11828), this protein is Translational regulator CsrA.